A 230-amino-acid polypeptide reads, in one-letter code: AA9 family lytic polysaccharide monooxygenase H (230 aa).

The first 17 residues, 1–17 (MKTLSAGLLALASAASA), serve as a signal peptide directing secretion. Residues His18 and His89 each coordinate Cu(2+). A disulfide bridge links Cys59 with Cys178. Residues His164 and Gln173 each coordinate O2. Residue Tyr175 coordinates Cu(2+).

It belongs to the polysaccharide monooxygenase AA9 family. Cu(2+) serves as cofactor.

The protein localises to the secreted. It catalyses the reaction [(1-&gt;4)-beta-D-glucosyl]n+m + reduced acceptor + O2 = 4-dehydro-beta-D-glucosyl-[(1-&gt;4)-beta-D-glucosyl]n-1 + [(1-&gt;4)-beta-D-glucosyl]m + acceptor + H2O.. In terms of biological role, lytic polysaccharide monooxygenase (LPMO) that depolymerizes crystalline and amorphous polysaccharides via the oxidation of scissile alpha- or beta-(1-4)-glycosidic bonds, yielding primarly C1 oxidation products. Catalysis by LPMOs requires the reduction of the active-site copper from Cu(II) to Cu(I) by a reducing agent and H(2)O(2) or O(2) as a cosubstrate. Active on hemicelluloses, including xylan, glucomannan, and xyloglucan. Preferentially cleaves residual xylan in phosphoric acid-swollen cellulose (PASC). Moreover, when exposed to cellulose-xylan blends, shows a preference for xylan and for releasing oxidized xylooligosaccharides. Has no activity on ivory nut mannan (INM), a linear beta-1,4-linked mannan without substitutions. The sequence is that of AA9 family lytic polysaccharide monooxygenase H from Malbranchea cinnamomea (Thermophilic fungus).